The chain runs to 93 residues: UPF0358 protein ABC2396 (93 aa).

It belongs to the UPF0358 family.

This Shouchella clausii (strain KSM-K16) (Alkalihalobacillus clausii) protein is UPF0358 protein ABC2396.